The chain runs to 896 residues: Translation initiation factor IF-2 (896 aa).

Positions 49–310 (LKKEHGDTSG…MQQGFDKSAT (262 aa)) are disordered. Residues 57–66 (SGETEPTRLT) show a composition bias toward polar residues. 3 stretches are compositionally biased toward basic and acidic residues: residues 101–174 (STIE…KDMN), 184–240 (AKKE…KSAD), and 250–263 (REAE…DEKA). Positions 284–295 (RNQRGRGGKGKL) are enriched in basic residues. The tr-type G domain occupies 395 to 564 (GRAPVVTIMG…LLQSEVLELT (170 aa)). The segment at 404 to 411 (GHVDHGKT) is G1. 404 to 411 (GHVDHGKT) provides a ligand contact to GTP. The G2 stretch occupies residues 429–433 (GITQH). A G3 region spans residues 450–453 (DTPG). GTP contacts are provided by residues 450 to 454 (DTPGH) and 504 to 507 (NKID). The segment at 504–507 (NKID) is G4. The segment at 540 to 542 (SAK) is G5.

The protein belongs to the TRAFAC class translation factor GTPase superfamily. Classic translation factor GTPase family. IF-2 subfamily.

The protein resides in the cytoplasm. Functionally, one of the essential components for the initiation of protein synthesis. Protects formylmethionyl-tRNA from spontaneous hydrolysis and promotes its binding to the 30S ribosomal subunits. Also involved in the hydrolysis of GTP during the formation of the 70S ribosomal complex. The polypeptide is Translation initiation factor IF-2 (Vibrio atlanticus (strain LGP32) (Vibrio splendidus (strain Mel32))).